Reading from the N-terminus, the 379-residue chain is Succinyl-diaminopimelate desuccinylase (379 aa).

H70 provides a ligand contact to Zn(2+). D72 is an active-site residue. D103 contributes to the Zn(2+) binding site. E137 functions as the Proton acceptor in the catalytic mechanism. The Zn(2+) site is built by E138, E166, and H352.

This sequence belongs to the peptidase M20A family. DapE subfamily. Homodimer. Zn(2+) is required as a cofactor. The cofactor is Co(2+).

The catalysed reaction is N-succinyl-(2S,6S)-2,6-diaminopimelate + H2O = (2S,6S)-2,6-diaminopimelate + succinate. Its pathway is amino-acid biosynthesis; L-lysine biosynthesis via DAP pathway; LL-2,6-diaminopimelate from (S)-tetrahydrodipicolinate (succinylase route): step 3/3. Functionally, catalyzes the hydrolysis of N-succinyl-L,L-diaminopimelic acid (SDAP), forming succinate and LL-2,6-diaminopimelate (DAP), an intermediate involved in the bacterial biosynthesis of lysine and meso-diaminopimelic acid, an essential component of bacterial cell walls. This chain is Succinyl-diaminopimelate desuccinylase, found in Shewanella baltica (strain OS195).